Here is a 402-residue protein sequence, read N- to C-terminus: Ferrochelatase, mitochondrial (402 aa).

A mitochondrion-targeting transit peptide spans 1–33 (MAAAGRAARPLVAGGRQLRVPLRWRGQVAAAAP). Positions 94, 102, and 109 each coordinate protoporphyrin IX. C175 is a binding site for [2Fe-2S] cluster. Catalysis depends on residues H209 and D362. [2Fe-2S] cluster-binding residues include C382, C385, and C390.

The protein belongs to the ferrochelatase family. Homodimer. Homotetramer. [2Fe-2S] cluster serves as cofactor.

It localises to the mitochondrion inner membrane. The catalysed reaction is heme b + 2 H(+) = protoporphyrin IX + Fe(2+). It functions in the pathway porphyrin-containing compound metabolism; protoheme biosynthesis; protoheme from protoporphyrin-IX: step 1/1. Catalyzes the ferrous insertion into protoporphyrin IX. The protein is Ferrochelatase, mitochondrial of Gallus gallus (Chicken).